The primary structure comprises 317 residues: Small glutamine-rich tetratricopeptide repeat-containing protein 2 (317 aa).

4 TPR repeats span residues 14–48 (LKQA…KPEE), 83–116 (AEKL…DPTS), 118–150 (VYYS…DPHH), and 151–184 (ARAF…DPNN). The span at 198-215 (LNQPSDSSATSGADQART) shows a compositional bias: polar residues. 2 disordered regions span residues 198–224 (LNQP…PDLG) and 298–317 (MNNN…PPPQ).

This sequence belongs to the SGT family.

The protein resides in the cytoplasm. Its subcellular location is the nucleus. Co-chaperone that binds to the molecular chaperone Hsp70 and regulates Hsp70 ATPase activity. This is Small glutamine-rich tetratricopeptide repeat-containing protein 2 (sgt2) from Schizosaccharomyces pombe (strain 972 / ATCC 24843) (Fission yeast).